The primary structure comprises 122 residues: Large ribosomal subunit protein uL14 (122 aa).

The protein belongs to the universal ribosomal protein uL14 family. In terms of assembly, part of the 50S ribosomal subunit. Forms a cluster with proteins L3 and L19. In the 70S ribosome, L14 and L19 interact and together make contacts with the 16S rRNA in bridges B5 and B8.

Binds to 23S rRNA. Forms part of two intersubunit bridges in the 70S ribosome. This is Large ribosomal subunit protein uL14 from Buchnera aphidicola subsp. Acyrthosiphon pisum (strain 5A).